Reading from the N-terminus, the 912-residue chain is E3 ubiquitin-protein ligase HACE1 (912 aa).

7 ANK repeats span residues 23-55 (LPEDNETAVYTLMPMVMADQHRSVLELLSNSKF), 64-93 (VKRSLLHIAANCGSVECLVLLLKRGADPNY), 97-126 (SGCTPLHLAARNGQKKCMSKLLEYNADVNI), 130-159 (EGLTAIHWLAVNGRTELLHDLVQHVTNVDV), 163-192 (MGQTALHVACQNGHKTTVLCLLDSGADINR), 196-226 (SGATPLYFACSHGQRDTAQILLLRGAKYLPD), and 228-253 (NGVTPLDLCVQGGYGETCDILIQHHP). The HECT domain maps to 577–912 (NCEKLKQGIA…HCGSYGYTMA (336 aa)). Cys-879 functions as the Glycyl thioester intermediate in the catalytic mechanism.

Its subcellular location is the golgi apparatus. It localises to the golgi stack membrane. It is found in the cytoplasm. The protein resides in the endoplasmic reticulum. It carries out the reaction S-ubiquitinyl-[E2 ubiquitin-conjugating enzyme]-L-cysteine + [acceptor protein]-L-lysine = [E2 ubiquitin-conjugating enzyme]-L-cysteine + N(6)-ubiquitinyl-[acceptor protein]-L-lysine.. It functions in the pathway protein modification; protein ubiquitination. Functionally, E3 ubiquitin-protein ligase involved in Golgi membrane fusion and regulation of small GTPases. Acts as a regulator of Golgi membrane dynamics during the cell cycle: recruited to Golgi membrane by Rab proteins and regulates postmitotic Golgi membrane fusion. Acts by mediating ubiquitination during mitotic Golgi disassembly, ubiquitination serving as a signal for Golgi reassembly later, after cell division. This Xenopus tropicalis (Western clawed frog) protein is E3 ubiquitin-protein ligase HACE1 (hace1).